Reading from the N-terminus, the 225-residue chain is ATP-dependent dethiobiotin synthetase BioD (225 aa).

12-17 contributes to the ATP binding site; the sequence is EVGKTY. Thr16 lines the Mg(2+) pocket. Lys37 is a catalytic residue. Ser41 is a substrate binding site. ATP-binding positions include Asp52, 114–117, and 174–175; these read EGAG and NC. The Mg(2+) site is built by Asp52 and Glu114.

It belongs to the dethiobiotin synthetase family. As to quaternary structure, homodimer. Mg(2+) serves as cofactor.

Its subcellular location is the cytoplasm. The enzyme catalyses (7R,8S)-7,8-diammoniononanoate + CO2 + ATP = (4R,5S)-dethiobiotin + ADP + phosphate + 3 H(+). The protein operates within cofactor biosynthesis; biotin biosynthesis; biotin from 7,8-diaminononanoate: step 1/2. Catalyzes a mechanistically unusual reaction, the ATP-dependent insertion of CO2 between the N7 and N8 nitrogen atoms of 7,8-diaminopelargonic acid (DAPA, also called 7,8-diammoniononanoate) to form a ureido ring. This is ATP-dependent dethiobiotin synthetase BioD from Francisella tularensis subsp. novicida (strain U112).